We begin with the raw amino-acid sequence, 207 residues long: Ras-related protein Rab-7a (207 aa).

Residue Thr-2 is modified to N-acetylthreonine. GTP contacts are provided by Ser-17, Gly-18, Val-19, Gly-20, Lys-21, Thr-22, Ser-23, Ser-34, Asn-35, Tyr-37, and Thr-40. Thr-22 serves as a coordination point for Mg(2+). Residues 28–41 (YVNKKFSNQYKATI) carry the Switch 1 motif. The Mg(2+) site is built by Thr-40 and Asp-63. Residue Gly-66 coordinates GTP. The Switch 2 motif lies at 67–82 (QERFQSLGVAFYRGAD). Ser-72 carries the post-translational modification Phosphoserine. GTP is bound by residues Asn-125, Lys-126, Asp-128, Ala-156, and Lys-157. Residues Lys-191 and Lys-194 each participate in a glycyl lysine isopeptide (Lys-Gly) (interchain with G-Cter in ubiquitin) cross-link. 2 S-geranylgeranyl cysteine lipidation sites follow: Cys-205 and Cys-207. Position 207 is a cysteine methyl ester (Cys-207).

It belongs to the small GTPase superfamily. Rab family. As to quaternary structure, interacts with NTRK1/TRKA. Interacts with RILP. Interacts with PSMA7. Interacts with RNF115. Interacts with FYCO1. Interacts with the PIK3C3/VPS34-PIK3R4 complex. The GTP-bound form interacts with OSBPL1A. The GTP-bound form interacts with RAC1. Interacts with CLN3. Interacts with CHM, the substrate-binding subunit of the Rab geranylgeranyltransferase complex. Interacts with C9orf72. Does not interact with HPS4 and the BLOC-3 complex (heterodimer of HPS1 and HPS4). Interacts with CLN5. Interacts with PLEKHM1 (via N- and C-terminus). Interacts with PRPH; the interaction is direct. Interacts with VPS13A. The GDP-bound form interacts with RIMOC1. Interacts with the MON1A-CCZ1B complex and this interaction is enhanced in the presence of RIMOC1. Interacts with VPS39 and VPS41. Forms a ternary complex with LAMP2 and RUFY4; the interaction with LAMP2 is mediated by RUFY4 (via RUN and coiled coil domains). The cofactor is Mg(2+). In terms of processing, deubiquitination at Lys-191 and Lys-194 by USP32. Post-translationally, phosphorylated at Ser-72 by LRRK1; phosphorylation is dependent on protein kinase C (PKC) activation of LRRK1. Prenylated. Prenylation is required for association with cellular membranes.

It localises to the cytoplasmic vesicle. The protein resides in the phagosome membrane. Its subcellular location is the late endosome membrane. It is found in the lysosome membrane. The protein localises to the melanosome membrane. It localises to the autophagosome membrane. The protein resides in the lipid droplet. Its subcellular location is the endosome membrane. It is found in the mitochondrion membrane. The enzyme catalyses GTP + H2O = GDP + phosphate + H(+). Regulated by guanine nucleotide exchange factors (GEFs) which promote the exchange of bound GDP for free GTP. Regulated by GTPase activating proteins (GAPs) which increase the GTP hydrolysis activity. Inhibited by GDP dissociation inhibitors (GDIs). Functionally, the small GTPases Rab are key regulators of intracellular membrane trafficking, from the formation of transport vesicles to their fusion with membranes. Rabs cycle between an inactive GDP-bound form and an active GTP-bound form that is able to recruit to membranes different sets of downstream effectors directly responsible for vesicle formation, movement, tethering and fusion. In its active state, RAB7A binds to a variety of effector proteins playing a key role in the regulation of endo-lysosomal trafficking. Governs early-to-late endosomal maturation, microtubule minus-end as well as plus-end directed endosomal migration and positioning, and endosome-lysosome transport through different protein-protein interaction cascades. Also plays a central role in growth-factor-mediated cell signaling, nutrient-transporter-mediated nutrient uptake, neurotrophin transport in the axons of neurons and lipid metabolism. Also involved in regulation of some specialized endosomal membrane trafficking, such as maturation of melanosomes, pathogen-induced phagosomes (or vacuoles) and autophagosomes. Plays a role in the maturation and acidification of phagosomes that engulf pathogens, such as S.aureus and Mycobacteria. Plays a role in the fusion of phagosomes with lysosomes. In concert with RAC1, plays a role in regulating the formation of RBs (ruffled borders) in osteoclasts. Controls the endosomal trafficking and neurite outgrowth signaling of NTRK1/TRKA. Regulates the endocytic trafficking of the EGF-EGFR complex by regulating its lysosomal degradation. Involved in the ADRB2-stimulated lipolysis through lipophagy, a cytosolic lipase-independent autophagic pathway. Required for the exosomal release of SDCBP, CD63 and syndecan. Required for vesicular trafficking and cell surface expression of ACE2. May play a role in PRPH neuronal intermediate filament assembly. The protein is Ras-related protein Rab-7a (RAB7A) of Canis lupus familiaris (Dog).